A 623-amino-acid polypeptide reads, in one-letter code: Pyranose 2-oxidase (623 aa).

Residues 1–28 form the signal peptide; that stretch reads MSTSSSDPFFNFAKSSFRSAAAQKASAS. A propeptide spanning residues 29-38 is cleaved from the precursor; the sequence is SLPPLPGPDK. Residue H167 is modified to Tele-8alpha-FAD histidine. The substrate site is built by Q448 and H450. H548 (proton acceptor) is an active-site residue. N593 is an active-site residue.

The protein belongs to the GMC oxidoreductase family. In terms of assembly, homotetramer. The cofactor is FAD.

The protein resides in the periplasm. It carries out the reaction D-glucose + O2 = 2-dehydro-D-glucose + H2O2. Its function is as follows. Catalyzes the oxidation of various aldopyranoses and disaccharides on carbon-2 to the corresponding 2-keto sugars concomitant with the reduction of O(2) to H(2)O(2). Plays an important role in lignin degradation of wood rot fungi by supplying the essential cosubstrate H(2)O(2) for the ligninolytic peroxidases, lignin peroxidase and manganese-dependent peroxidase. The protein is Pyranose 2-oxidase (p2ox) of Peniophora sp. (strain SG) (White-rot fungus).